The following is a 96-amino-acid chain: UPF0251 protein Ssed_3913 (96 aa).

It belongs to the UPF0251 family.

In Shewanella sediminis (strain HAW-EB3), this protein is UPF0251 protein Ssed_3913.